Consider the following 177-residue polypeptide: ATP synthase subunit delta (177 aa).

This sequence belongs to the ATPase delta chain family. As to quaternary structure, F-type ATPases have 2 components, F(1) - the catalytic core - and F(0) - the membrane proton channel. F(1) has five subunits: alpha(3), beta(3), gamma(1), delta(1), epsilon(1). F(0) has three main subunits: a(1), b(2) and c(10-14). The alpha and beta chains form an alternating ring which encloses part of the gamma chain. F(1) is attached to F(0) by a central stalk formed by the gamma and epsilon chains, while a peripheral stalk is formed by the delta and b chains.

The protein localises to the cell inner membrane. In terms of biological role, f(1)F(0) ATP synthase produces ATP from ADP in the presence of a proton or sodium gradient. F-type ATPases consist of two structural domains, F(1) containing the extramembraneous catalytic core and F(0) containing the membrane proton channel, linked together by a central stalk and a peripheral stalk. During catalysis, ATP synthesis in the catalytic domain of F(1) is coupled via a rotary mechanism of the central stalk subunits to proton translocation. This protein is part of the stalk that links CF(0) to CF(1). It either transmits conformational changes from CF(0) to CF(1) or is implicated in proton conduction. In Shewanella oneidensis (strain ATCC 700550 / JCM 31522 / CIP 106686 / LMG 19005 / NCIMB 14063 / MR-1), this protein is ATP synthase subunit delta.